The primary structure comprises 370 residues: Pyruvate dehydrogenase E1 component subunit alpha (370 aa).

As to quaternary structure, heterodimer of an alpha and a beta chain. Thiamine diphosphate serves as cofactor.

The enzyme catalyses N(6)-[(R)-lipoyl]-L-lysyl-[protein] + pyruvate + H(+) = N(6)-[(R)-S(8)-acetyldihydrolipoyl]-L-lysyl-[protein] + CO2. Functionally, the pyruvate dehydrogenase complex catalyzes the overall conversion of pyruvate to acetyl-CoA and CO(2). It contains multiple copies of three enzymatic components: pyruvate dehydrogenase (E1), dihydrolipoamide acetyltransferase (E2) and lipoamide dehydrogenase (E3). The chain is Pyruvate dehydrogenase E1 component subunit alpha (pdhA) from Staphylococcus aureus (strain MRSA252).